The following is a 307-amino-acid chain: Ribosomal protein L11 methyltransferase (307 aa).

S-adenosyl-L-methionine contacts are provided by threonine 154, glycine 178, aspartate 200, and asparagine 242.

The protein belongs to the methyltransferase superfamily. PrmA family.

Its subcellular location is the cytoplasm. The enzyme catalyses L-lysyl-[protein] + 3 S-adenosyl-L-methionine = N(6),N(6),N(6)-trimethyl-L-lysyl-[protein] + 3 S-adenosyl-L-homocysteine + 3 H(+). Functionally, methylates ribosomal protein L11. The sequence is that of Ribosomal protein L11 methyltransferase from Syntrophotalea carbinolica (strain DSM 2380 / NBRC 103641 / GraBd1) (Pelobacter carbinolicus).